Reading from the N-terminus, the 191-residue chain is Probable GTP-binding protein EngB (191 aa).

The region spanning 22–191 is the EngB-type G domain; sequence DFDHFLILGR…KLINEEFSNE (170 aa). Residues 30–37, 57–61, 75–78, 142–145, and 172–174 each bind GTP; these read GRSNVGKS, GKTIT, DAPG, TKYD, and TSS. The Mg(2+) site is built by S37 and T59.

The protein belongs to the TRAFAC class TrmE-Era-EngA-EngB-Septin-like GTPase superfamily. EngB GTPase family. Mg(2+) is required as a cofactor.

Necessary for normal cell division and for the maintenance of normal septation. The polypeptide is Probable GTP-binding protein EngB (Acholeplasma laidlawii (strain PG-8A)).